Reading from the N-terminus, the 221-residue chain is Crossover junction endodeoxyribonuclease RuvC (221 aa).

Residues aspartate 12, glutamate 73, and aspartate 146 contribute to the active site. 3 residues coordinate Mg(2+): aspartate 12, glutamate 73, and aspartate 146. Residues 169–221 (SQYSEQELEKRRRVQQGKLGKAKSTYNAEQAQSHASDPAKAAHPSQFQRTDTN) are disordered. Residues 192-203 (STYNAEQAQSHA) show a composition bias toward polar residues.

Belongs to the RuvC family. Homodimer which binds Holliday junction (HJ) DNA. The HJ becomes 2-fold symmetrical on binding to RuvC with unstacked arms; it has a different conformation from HJ DNA in complex with RuvA. In the full resolvosome a probable DNA-RuvA(4)-RuvB(12)-RuvC(2) complex forms which resolves the HJ. It depends on Mg(2+) as a cofactor.

It localises to the cytoplasm. The catalysed reaction is Endonucleolytic cleavage at a junction such as a reciprocal single-stranded crossover between two homologous DNA duplexes (Holliday junction).. Its function is as follows. The RuvA-RuvB-RuvC complex processes Holliday junction (HJ) DNA during genetic recombination and DNA repair. Endonuclease that resolves HJ intermediates. Cleaves cruciform DNA by making single-stranded nicks across the HJ at symmetrical positions within the homologous arms, yielding a 5'-phosphate and a 3'-hydroxyl group; requires a central core of homology in the junction. The consensus cleavage sequence is 5'-(A/T)TT(C/G)-3'. Cleavage occurs on the 3'-side of the TT dinucleotide at the point of strand exchange. HJ branch migration catalyzed by RuvA-RuvB allows RuvC to scan DNA until it finds its consensus sequence, where it cleaves and resolves the cruciform DNA. The sequence is that of Crossover junction endodeoxyribonuclease RuvC from Corynebacterium glutamicum (strain ATCC 13032 / DSM 20300 / JCM 1318 / BCRC 11384 / CCUG 27702 / LMG 3730 / NBRC 12168 / NCIMB 10025 / NRRL B-2784 / 534).